We begin with the raw amino-acid sequence, 276 residues long: Orotidine 5'-phosphate decarboxylase (276 aa).

The active-site Proton donor is the Lys93.

The protein belongs to the OMP decarboxylase family. Type 2 subfamily.

The enzyme catalyses orotidine 5'-phosphate + H(+) = UMP + CO2. Its pathway is pyrimidine metabolism; UMP biosynthesis via de novo pathway; UMP from orotate: step 2/2. The polypeptide is Orotidine 5'-phosphate decarboxylase (Halorubrum lacusprofundi (strain ATCC 49239 / DSM 5036 / JCM 8891 / ACAM 34)).